The sequence spans 65 residues: Large ribosomal subunit protein bL35 (65 aa).

The protein belongs to the bacterial ribosomal protein bL35 family.

The chain is Large ribosomal subunit protein bL35 from Prochlorococcus marinus (strain MIT 9313).